A 355-amino-acid polypeptide reads, in one-letter code: Ubiquinone biosynthesis protein COQ4 homolog, mitochondrial (355 aa).

Residues His134, Asp135, His138, and Glu150 each coordinate Zn(2+).

Belongs to the COQ4 family. Component of a multi-subunit COQ enzyme complex. Zn(2+) is required as a cofactor.

It is found in the mitochondrion inner membrane. The enzyme catalyses a 4-hydroxy-3-methoxy-5-(all-trans-polyprenyl)benzoate + H(+) = a 2-methoxy-6-(all-trans-polyprenyl)phenol + CO2. It participates in cofactor biosynthesis; ubiquinone biosynthesis. In terms of biological role, lyase that catalyzes the C1-decarboxylation of 4-hydroxy-3-methoxy-5-(all-trans-polyprenyl)benzoic acid into 2-methoxy-6-(all-trans-polyprenyl)phenol during ubiquinone biosynthesis. The polypeptide is Ubiquinone biosynthesis protein COQ4 homolog, mitochondrial (Plasmodium knowlesi (strain H)).